Here is a 265-residue protein sequence, read N- to C-terminus: Isoprenyl transferase (265 aa).

The active site involves D35. D35 is a Mg(2+) binding site. Substrate-binding positions include 36 to 39, W40, R48, H52, and 80 to 82; these read GNGR and STE. N83 serves as the catalytic Proton acceptor. Substrate contacts are provided by residues W84, R86, R203, and 209-211; that span reads RIS. Mg(2+) is bound at residue E222.

It belongs to the UPP synthase family. In terms of assembly, homodimer. It depends on Mg(2+) as a cofactor.

In terms of biological role, catalyzes the condensation of isopentenyl diphosphate (IPP) with allylic pyrophosphates generating different type of terpenoids. The polypeptide is Isoprenyl transferase (Prochlorococcus marinus (strain MIT 9313)).